A 279-amino-acid polypeptide reads, in one-letter code: 3-methyl-2-oxobutanoate hydroxymethyltransferase (279 aa).

Mg(2+) is bound by residues Asp43 and Asp82. Residues 43–44 (DS), Asp82, and Lys112 contribute to the 3-methyl-2-oxobutanoate site. Residue Glu114 participates in Mg(2+) binding. Catalysis depends on Glu181, which acts as the Proton acceptor.

Belongs to the PanB family. In terms of assembly, homodecamer; pentamer of dimers. The cofactor is Mg(2+).

It is found in the cytoplasm. It carries out the reaction 3-methyl-2-oxobutanoate + (6R)-5,10-methylene-5,6,7,8-tetrahydrofolate + H2O = 2-dehydropantoate + (6S)-5,6,7,8-tetrahydrofolate. Its pathway is cofactor biosynthesis; (R)-pantothenate biosynthesis; (R)-pantoate from 3-methyl-2-oxobutanoate: step 1/2. Catalyzes the reversible reaction in which hydroxymethyl group from 5,10-methylenetetrahydrofolate is transferred onto alpha-ketoisovalerate to form ketopantoate. In Bacillus anthracis (strain A0248), this protein is 3-methyl-2-oxobutanoate hydroxymethyltransferase.